Here is a 230-residue protein sequence, read N- to C-terminus: Cytochrome c oxidase subunit 2 (230 aa).

Residues 1 to 14 (MAHPSQLGFQDAAS) are Mitochondrial intermembrane-facing. Residues 15–45 (PVMEELLHFHDHALMIVLLISTLVLYIIVAM) form a helical membrane-spanning segment. The Mitochondrial matrix segment spans residues 46-59 (VSTKLTNMYILDSQ). The chain crosses the membrane as a helical span at residues 60 to 87 (EIEIVWTVLPAVILILIALPSLRILYLM). Residues 88-230 (DEINDPHLTI…KWSTMMLEDA (143 aa)) lie on the Mitochondrial intermembrane side of the membrane. Residues H161, C196, E198, C200, H204, and M207 each coordinate Cu cation. A Mg(2+)-binding site is contributed by E198.

This sequence belongs to the cytochrome c oxidase subunit 2 family. As to quaternary structure, component of the cytochrome c oxidase (complex IV, CIV), a multisubunit enzyme composed of 14 subunits. The complex is composed of a catalytic core of 3 subunits MT-CO1, MT-CO2 and MT-CO3, encoded in the mitochondrial DNA, and 11 supernumerary subunits COX4I, COX5A, COX5B, COX6A, COX6B, COX6C, COX7A, COX7B, COX7C, COX8 and NDUFA4, which are encoded in the nuclear genome. The complex exists as a monomer or a dimer and forms supercomplexes (SCs) in the inner mitochondrial membrane with NADH-ubiquinone oxidoreductase (complex I, CI) and ubiquinol-cytochrome c oxidoreductase (cytochrome b-c1 complex, complex III, CIII), resulting in different assemblies (supercomplex SCI(1)III(2)IV(1) and megacomplex MCI(2)III(2)IV(2)). Found in a complex with TMEM177, COA6, COX18, COX20, SCO1 and SCO2. Interacts with TMEM177 in a COX20-dependent manner. Interacts with COX20. Interacts with COX16. It depends on Cu cation as a cofactor.

It localises to the mitochondrion inner membrane. It catalyses the reaction 4 Fe(II)-[cytochrome c] + O2 + 8 H(+)(in) = 4 Fe(III)-[cytochrome c] + 2 H2O + 4 H(+)(out). In terms of biological role, component of the cytochrome c oxidase, the last enzyme in the mitochondrial electron transport chain which drives oxidative phosphorylation. The respiratory chain contains 3 multisubunit complexes succinate dehydrogenase (complex II, CII), ubiquinol-cytochrome c oxidoreductase (cytochrome b-c1 complex, complex III, CIII) and cytochrome c oxidase (complex IV, CIV), that cooperate to transfer electrons derived from NADH and succinate to molecular oxygen, creating an electrochemical gradient over the inner membrane that drives transmembrane transport and the ATP synthase. Cytochrome c oxidase is the component of the respiratory chain that catalyzes the reduction of oxygen to water. Electrons originating from reduced cytochrome c in the intermembrane space (IMS) are transferred via the dinuclear copper A center (CU(A)) of subunit 2 and heme A of subunit 1 to the active site in subunit 1, a binuclear center (BNC) formed by heme A3 and copper B (CU(B)). The BNC reduces molecular oxygen to 2 water molecules using 4 electrons from cytochrome c in the IMS and 4 protons from the mitochondrial matrix. This is Cytochrome c oxidase subunit 2 (mt-co2) from Oncorhynchus mykiss (Rainbow trout).